The sequence spans 216 residues: Somatotropin (216 aa).

The signal sequence occupies residues 1-26 (MAAGPRTSMLLAFALLCLPWTQEVGA). H45 contacts Zn(2+). An intrachain disulfide couples C78 to C189. Position 131 is a phosphoserine (S131). E198 contacts Zn(2+). C206 and C214 form a disulfide bridge.

This sequence belongs to the somatotropin/prolactin family.

The protein resides in the secreted. Plays an important role in growth control. Its major role in stimulating body growth is to stimulate the liver and other tissues to secrete IGF1. It stimulates both the differentiation and proliferation of myoblasts. It also stimulates amino acid uptake and protein synthesis in muscle and other tissues. This chain is Somatotropin (GH1), found in Delphinus delphis (Short-beaked common dolphin).